A 508-amino-acid polypeptide reads, in one-letter code: MGLPWYRVHTVVLNDPGRLLSVHIMHTALVSGWAGSMALYELAVFDPSDPVLDPMWRQGMFVIPFMTRLGITNSWGGWSITGGTITNPGIWSYEGVAGAHIVFSGLCFLAAIWHWVYWDLEIFCDERTGKPSLDLPKIFGIHLFLSGVACFGFGAFHVTGLYGPGIWVSDPYGLTGKVQPISPSWGAEGFDPFVPGGIASHHIAAGTLGILAGLFHLSVRPPQRLYKALRMGNIETVLSSSIAAVFFAAFVVAGTMWYGSATTPIELFGPTRYQWDQGYFQQEIYRRVNAGLAENLSLSESWSKIPDKLAFYDYIGNNPAKGGLFRAGSMDNGDGIAVGWLGHPIFRDKEGHELFVRRMPTFFETFPVVLVDGDGIVRADVPFRRAESKYSVEQVGVTVEFYGGELDGVSYNDPATVKKYARRAQLGEIFELDRATLKSDGVFRSSPRGWFTFGHASFALLFFFGHIWHGARTLFRDVFAGIDPDLDAQVEFGTFQKLGDPTTRRQVV.

6 consecutive transmembrane segments (helical) span residues 21–36 (SVHI…WAGS), 101–115 (IVFS…IWHW), 140–156 (GIHL…FGAF), 203–218 (IAAG…FHLS), 237–252 (VLSS…AFVV), and 457–472 (SFAL…HGAR).

This sequence belongs to the PsbB/PsbC family. PsbB subfamily. In terms of assembly, PSII is composed of 1 copy each of membrane proteins PsbA, PsbB, PsbC, PsbD, PsbE, PsbF, PsbH, PsbI, PsbJ, PsbK, PsbL, PsbM, PsbT, PsbX, PsbY, PsbZ, Psb30/Ycf12, at least 3 peripheral proteins of the oxygen-evolving complex and a large number of cofactors. It forms dimeric complexes. Binds multiple chlorophylls. PSII binds additional chlorophylls, carotenoids and specific lipids. is required as a cofactor.

The protein localises to the plastid. It is found in the chloroplast thylakoid membrane. One of the components of the core complex of photosystem II (PSII). It binds chlorophyll and helps catalyze the primary light-induced photochemical processes of PSII. PSII is a light-driven water:plastoquinone oxidoreductase, using light energy to abstract electrons from H(2)O, generating O(2) and a proton gradient subsequently used for ATP formation. The chain is Photosystem II CP47 reaction center protein from Nuphar advena (Common spatterdock).